The primary structure comprises 131 residues: Ribosome-binding factor A (131 aa).

Belongs to the RbfA family. Monomer. Binds 30S ribosomal subunits, but not 50S ribosomal subunits or 70S ribosomes.

The protein localises to the cytoplasm. Its function is as follows. One of several proteins that assist in the late maturation steps of the functional core of the 30S ribosomal subunit. Associates with free 30S ribosomal subunits (but not with 30S subunits that are part of 70S ribosomes or polysomes). Required for efficient processing of 16S rRNA. May interact with the 5'-terminal helix region of 16S rRNA. The polypeptide is Ribosome-binding factor A (Thermotoga petrophila (strain ATCC BAA-488 / DSM 13995 / JCM 10881 / RKU-1)).